The following is a 115-amino-acid chain: Virulence-associated protein A' (115 aa).

An HTH cro/C1-type domain is found at 16-70 (IKSDLDGLGINITEAAKALDVTRAALSEIINGKRGISAKMAWKLSKAFTNSDPEF). A DNA-binding region (H-T-H motif) is located at residues 27-46 (ITEAAKALDVTRAALSEIIN).

It belongs to the VapA/VapI family.

The sequence is that of Virulence-associated protein A' (vapA') from Dichelobacter nodosus (Bacteroides nodosus).